Reading from the N-terminus, the 676-residue chain is Pescadillo homolog (676 aa).

A coiled-coil region spans residues 298-327 (IAAMADDEDEQEVEMAEADAEDDDEEENTE). Disordered stretches follow at residues 298-338 (IAAM…TAPD), 413-439 (PLAN…STKP), 478-502 (VKPK…EAEA), and 515-676 (EVDD…AERA). Over residues 302-327 (ADDEDEQEVEMAEADAEDDDEEENTE) the composition is skewed to acidic residues. The 116-residue stretch at 351–466 (EIASLFAPFT…KLLRPDLYAP (116 aa)) folds into the BRCT domain. A compositionally biased stretch (low complexity) spans 415 to 427 (ANGASAAGAEDAA). Composition is skewed to acidic residues over residues 515–524 (EVDDDEDMDA), 539–557 (DVAD…DAEG), and 565–577 (FDDE…DISE). A coiled-coil region spans residues 568-676 (ESEAESDISE…EKAKAAAERA (109 aa)). Composition is skewed to basic and acidic residues over residues 579–608 (EAAR…KKEQ), 620–631 (KRAEEEERDRQK), 643–659 (KRIE…SENL), and 666–676 (LEKAKAAAERA).

The protein belongs to the pescadillo family. As to quaternary structure, component of the NOP7 complex, composed of ERB1, NOP7 and YTM1. The complex is held together by ERB1, which interacts with NOP7 via its N-terminal domain and with YTM1 via a high-affinity interaction between the seven-bladed beta-propeller domains of the 2 proteins. The NOP7 complex associates with the 66S pre-ribosome.

It localises to the nucleus. The protein resides in the nucleolus. Its subcellular location is the nucleoplasm. In terms of biological role, component of the NOP7 complex, which is required for maturation of the 25S and 5.8S ribosomal RNAs and formation of the 60S ribosome. This chain is Pescadillo homolog, found in Phaeosphaeria nodorum (strain SN15 / ATCC MYA-4574 / FGSC 10173) (Glume blotch fungus).